The chain runs to 180 residues: Large ribosomal subunit protein uL6 (180 aa).

This sequence belongs to the universal ribosomal protein uL6 family. As to quaternary structure, part of the 50S ribosomal subunit.

Its function is as follows. This protein binds to the 23S rRNA, and is important in its secondary structure. It is located near the subunit interface in the base of the L7/L12 stalk, and near the tRNA binding site of the peptidyltransferase center. The chain is Large ribosomal subunit protein uL6 from Lachnoclostridium phytofermentans (strain ATCC 700394 / DSM 18823 / ISDg) (Clostridium phytofermentans).